The sequence spans 555 residues: O-fucosyltransferase 20 (555 aa).

Residues methionine 1–arginine 58 are Cytoplasmic-facing. A helical; Signal-anchor for type II membrane protein membrane pass occupies residues isoleucine 59–valine 79. Residues aspartate 80–glutamine 555 are Lumenal-facing. A disordered region spans residues lysine 110–glutamate 130. N-linked (GlcNAc...) asparagine glycosylation is found at asparagine 111 and asparagine 124. Histidine 330–arginine 332 contributes to the substrate binding site. N-linked (GlcNAc...) asparagine glycans are attached at residues asparagine 371 and asparagine 503. The segment at glutamine 525 to glutamine 555 is disordered. The span at arginine 529–glutamine 555 shows a compositional bias: basic and acidic residues.

It belongs to the glycosyltransferase GT106 family. Highly expressed in embryogenic microspore and in vegetative tissues.

It is found in the golgi apparatus membrane. It functions in the pathway glycan metabolism. Its function is as follows. May play a role in the biosynthesis of matrix polysaccharides and contribute to the biomechanics and development of the plant cell wall. The protein is O-fucosyltransferase 20 of Brassica napus (Rape).